We begin with the raw amino-acid sequence, 129 residues long: Small ribosomal subunit protein uS11 (129 aa).

Belongs to the universal ribosomal protein uS11 family. In terms of assembly, part of the 30S ribosomal subunit. Interacts with proteins S7 and S18. Binds to IF-3.

In terms of biological role, located on the platform of the 30S subunit, it bridges several disparate RNA helices of the 16S rRNA. Forms part of the Shine-Dalgarno cleft in the 70S ribosome. This is Small ribosomal subunit protein uS11 from Maricaulis maris (strain MCS10) (Caulobacter maris).